We begin with the raw amino-acid sequence, 256 residues long: Non-homologous end joining protein Ku 2 (256 aa).

The 172-residue stretch at 13-184 (FADTDVAVKL…SLELQESPVS (172 aa)) folds into the Ku domain.

It belongs to the prokaryotic Ku family. Homodimer. Interacts with LigD.

Functionally, with LigD forms a non-homologous end joining (NHEJ) DNA repair enzyme, which repairs dsDNA breaks with reduced fidelity. Binds linear dsDNA with 5'- and 3'- overhangs but not closed circular dsDNA nor ssDNA. Recruits and stimulates the ligase activity of LigD. This is Non-homologous end joining protein Ku 2 from Geotalea uraniireducens (strain Rf4) (Geobacter uraniireducens).